A 389-amino-acid polypeptide reads, in one-letter code: MEMKDYIFTSESVSEGHPDKVADQVSDSILDAILAQDPRARVACETLVTTGMAVIAGEITTSAVVDYPKVVRETIREIGYNDSAMGFDWETCAVLVSIDKQSPDISQGVTEGEGMFKEQGAGDQGLMFGYACTETPELMPMSITYAHKLTQKLAEVRKNGVLDFLRPDSKSQVSVEYVDDKPVRVDTVVISSQHTPEVSYEAIKEGIIEEVVKKIIPAHLMDERTRMLINPTGRFVVGGPMGDCGLTGRKIIVDSYGGHGAHGGGAFSGKDPSKVDRSAAYMGRYVAKNLVAAGLCEKCEVQVAYAIGVAEPVSVMVDTAGTGKISSKRIAEIVREVFDLRPRAIIEQLDLLRPIYRKTAAYGHFGRELPEFTWERTDKVYMIRQKAGI.

H17 contacts ATP. D19 serves as a coordination point for Mg(2+). Residue E45 coordinates K(+). L-methionine is bound by residues E58 and Q101. Positions 101 to 111 are flexible loop; the sequence is QSPDISQGVTE. Residues 168–170, 234–235, D243, 249–250, A266, and K270 each bind ATP; these read DSK, RF, and RK. D243 contributes to the L-methionine binding site. K274 lines the L-methionine pocket.

It belongs to the AdoMet synthase family. As to quaternary structure, homotetramer; dimer of dimers. Requires Mg(2+) as cofactor. K(+) serves as cofactor.

It localises to the cytoplasm. It catalyses the reaction L-methionine + ATP + H2O = S-adenosyl-L-methionine + phosphate + diphosphate. It participates in amino-acid biosynthesis; S-adenosyl-L-methionine biosynthesis; S-adenosyl-L-methionine from L-methionine: step 1/1. Its function is as follows. Catalyzes the formation of S-adenosylmethionine (AdoMet) from methionine and ATP. The overall synthetic reaction is composed of two sequential steps, AdoMet formation and the subsequent tripolyphosphate hydrolysis which occurs prior to release of AdoMet from the enzyme. In Geobacter metallireducens (strain ATCC 53774 / DSM 7210 / GS-15), this protein is S-adenosylmethionine synthase.